A 1514-amino-acid chain; its full sequence is Neurexin-1 (1514 aa).

Residues methionine 1–glycine 30 form the signal peptide. The region spanning leucine 31–cysteine 217 is the Laminin G-like 1 domain. At leucine 31–threonine 1438 the chain is on the extracellular side. Residues asparagine 125 and asparagine 190 are each glycosylated (N-linked (GlcNAc...) asparagine). The disordered stretch occupies residues valine 197–glutamate 221. The EGF-like 1 domain maps to alanine 219 to serine 256. Intrachain disulfides connect cysteine 228–cysteine 243 and cysteine 245–cysteine 255. 2 Laminin G-like domains span residues isoleucine 283–cysteine 480 and aspartate 487–cysteine 679. Positions 329, 346, and 414 each coordinate Ca(2+). 5 disulfide bridges follow: cysteine 444–cysteine 480, cysteine 650–cysteine 679, cysteine 687–cysteine 698, cysteine 692–cysteine 707, and cysteine 709–cysteine 719. The EGF-like 2 domain maps to threonine 683–glutamate 720. Laminin G-like domains are found at residues valine 725–cysteine 898 and aspartate 912–cysteine 1087. Residues aspartate 772 and leucine 789 each coordinate Ca(2+). Asparagine 797 is a glycosylation site (N-linked (GlcNAc...) asparagine). Arginine 848 serves as a coordination point for Ca(2+). 5 disulfides stabilise this stretch: cysteine 890–cysteine 898, cysteine 1059–cysteine 1087, cysteine 1094–cysteine 1105, cysteine 1099–cysteine 1114, and cysteine 1116–cysteine 1126. Residues proline 1090–asparagine 1127 form the EGF-like 3 domain. The region spanning tyrosine 1133–valine 1331 is the Laminin G-like 6 domain. Aspartate 1183 and valine 1200 together coordinate Ca(2+). The N-linked (GlcNAc...) asparagine glycan is linked to asparagine 1230. Ca(2+)-binding residues include isoleucine 1282 and asparagine 1284. A glycan (O-linked (Xyl...) (heparan sulfate) serine) is linked at serine 1392. The tract at residues proline 1396–serine 1427 is disordered. The helical transmembrane segment at glycine 1439–methionine 1459 threads the bilayer. Residues tyrosine 1460–valine 1514 lie on the Cytoplasmic side of the membrane. The interval asparagine 1481–asparagine 1507 is interaction with CASK. Positions asparagine 1481–valine 1514 are disordered.

The protein belongs to the neurexin family. In terms of assembly, interacts (via laminin G-like domain 2 and/or laminin G-like domain 6) with NLGN1 forming a heterotetramer, where one NLGN1 dimer interacts with one NRXN1 dimer. Also interacts (via laminin G-like domain 2 and/or laminin G-like domain 6) with NLGN2, NLGN3 and NLGN4L; interactions with NLGN1, NLGN2, NLGN3 and NLGN4L are calcium-dependent. Interacts (via cytoplasmic C-terminal region) with CASK (via the PDZ, SH3 and guanylate kinase-like domains). Interacts (via cytoplasmic C-terminus) with CASKIN1 and APBA1. Interacts (via laminin G-like domain 2) with NXPH1 and NXPH3. Alpha-type isoforms (neurexin-1-alpha) interact (via laminin G-like domain 2 and/or laminin G-like domain 6) with DAG1 (via alpha-dystroglycan chain). Interacts with LRRTM1, LRRTM2, LRRTM3 and LRRTM4. Interacts with SYT13 and SYTL1. Interacts with CBLN1, CBLN2 and, less avidly, with CBLN4. Interacts with CLSTN3. In terms of processing, O-glycosylated; contains heparan sulfate. Heparan sulfate attachment is required for synapse development by mediating interactions with neuroligins and LRRTM2.

The protein resides in the presynaptic cell membrane. Functionally, cell surface protein involved in cell-cell-interactions, exocytosis of secretory granules and regulation of signal transmission. Function is isoform-specific. Alpha-type isoforms have a long N-terminus with six laminin G-like domains and play an important role in synaptic signal transmission. Alpha-type isoforms play a role in the regulation of calcium channel activity and Ca(2+)-triggered neurotransmitter release at synapses and at neuromuscular junctions. They play an important role in Ca(2+)-triggered exocytosis of secretory granules in pituitary gland. They may affect their functions at synapses and in endocrine cells via their interactions with proteins from the exocytotic machinery. Likewise, alpha-type isoforms play a role in regulating the activity of postsynaptic NMDA receptors, a subtype of glutamate-gated ion channels. Both alpha-type and beta-type isoforms may play a role in the formation or maintenance of synaptic junctions via their interactions (via the extracellular domains) with neuroligin family members, CBLN1 or CBLN2. In vitro, triggers the de novo formation of presynaptic structures. May be involved in specification of excitatory synapses. Alpha-type isoforms were first identified as receptors for alpha-latrotoxin from spider venom. The sequence is that of Neurexin-1 (Nrxn1) from Mus musculus (Mouse).